Consider the following 181-residue polypeptide: Adenine phosphoribosyltransferase (181 aa).

The protein belongs to the purine/pyrimidine phosphoribosyltransferase family. Homodimer.

It localises to the cytoplasm. It carries out the reaction AMP + diphosphate = 5-phospho-alpha-D-ribose 1-diphosphate + adenine. Its pathway is purine metabolism; AMP biosynthesis via salvage pathway; AMP from adenine: step 1/1. Its function is as follows. Catalyzes a salvage reaction resulting in the formation of AMP, that is energically less costly than de novo synthesis. The sequence is that of Adenine phosphoribosyltransferase from Brucella abortus (strain S19).